The primary structure comprises 370 residues: Zinc finger protein 830 (370 aa).

Disordered regions lie at residues 1–21 (MASS…QEEL) and 75–220 (HRER…LVPH). The residue at position 2 (A2) is an N-acetylalanine. A coiled-coil region spans residues 16 to 40 (VNQEELRRLMKEKQRLSTNRKRIES). The C2H2-type zinc-finger motif lies at 53–75 (CALCNTPVKSELLWQTHVLGKQH). Over residues 90–99 (QGPSAGTAPQ) the composition is skewed to polar residues. Positions 104 to 115 (KTTDVESQDAKK) are enriched in basic and acidic residues. Residues 121–134 (DQVQPSTSASSANF) are compositionally biased toward polar residues. The segment covering 156–171 (DYEEEEEEEEEEELGG) has biased composition (acidic residues). Over residues 172–191 (GEERRDSSKHLPDAQGREHS) the composition is skewed to basic and acidic residues. The span at 196 to 212 (RETTSNVLPNDPFNTNP) shows a compositional bias: polar residues. S223 carries the post-translational modification Phosphoserine. Residues 310 to 338 (IECYRRVEKLRNRQDEIKNKLKEVLTIKE) adopt a coiled-coil conformation. Residues S349 and S360 each carry the phosphoserine modification.

Component of the XAB2 complex, a multimeric protein complex composed of XAB2, PRPF19, AQR, ZNF830, ISY1, and PPIE; this complex binds preferentially to RNA. Interacts with XAB2. Identified in a pentameric intron-binding (IB) complex composed of AQR, XAB2, ISY1, ZNF830 and PPIE that is incorporated into the spliceosome as a preassembled complex. The IB complex does not contain PRPF19. Phosphorylated in response to DNA damage by the cell cycle checkpoint kinases ATR/ATM.

The protein resides in the nucleus. The protein localises to the chromosome. It localises to the nucleus speckle. In terms of biological role, may play a role in pre-mRNA splicing as component of the spliceosome. Acts as an important regulator of the cell cycle that participates in the maintenance of genome integrity. During cell cycle progression in embryonic fibroblast, prevents replication fork collapse, double-strand break formation and cell cycle checkpoint activation. Controls mitotic cell cycle progression and cell survival in rapidly proliferating intestinal epithelium and embryonic stem cells. During the embryo preimplantation, controls different aspects of M phase. During early oocyte growth, plays a role in oocyte survival by preventing chromosomal breaks formation, activation of TP63 and reduction of transcription. In Rattus norvegicus (Rat), this protein is Zinc finger protein 830.